A 353-amino-acid polypeptide reads, in one-letter code: Stomatin-like protein 2, mitochondrial (353 aa).

The transit peptide at 1–28 directs the protein to the mitochondrion; that stretch reads MLARAARGTGALLLRGSVQASGRVPRRA. S17 is subject to Phosphoserine; by PKC/PRKCZ. Y124 is modified (phosphotyrosine). An N6-acetyllysine; alternate modification is found at K145. An N6-succinyllysine; alternate modification is found at K145. Residues 215–252 adopt a coiled-coil conformation; the sequence is INVAEGKKQAQILASEAEKAEQINQAAGEASAVLAKAK. K233 bears the N6-acetyllysine mark. Residues 324–353 are disordered; sequence VPGAQNSSQSRRDVQATDTSIEELGRVKLS. At S330 the chain carries Phosphoserine.

This sequence belongs to the band 7/mec-2 family. In terms of assembly, forms homooligomers. Interacts with MFN2; may form heterooligomers. Interacts with PHB1 and PHB2; recruits them to cardiolipin-enriched mitochondrial membranes and stabilizes them. Interacts with CACNA2D2.

It localises to the cell membrane. The protein resides in the mitochondrion. The protein localises to the mitochondrion inner membrane. Its subcellular location is the mitochondrion intermembrane space. It is found in the membrane raft. It localises to the cytoplasm. The protein resides in the cytoskeleton. In terms of biological role, mitochondrial protein that probably regulates the biogenesis and the activity of mitochondria. Stimulates cardiolipin biosynthesis, binds cardiolipin-enriched membranes where it recruits and stabilizes some proteins including prohibitin and may therefore act in the organization of functional microdomains in mitochondrial membranes. Through regulation of the mitochondrial function may play a role into several biological processes including cell migration, cell proliferation, T-cell activation, calcium homeostasis and cellular response to stress. May play a role in calcium homeostasis through negative regulation of calcium efflux from mitochondria. Required for mitochondrial hyperfusion a pro-survival cellular response to stress which results in increased ATP production by mitochondria. May also regulate the organization of functional domains at the plasma membrane and play a role in T-cell activation through association with the T-cell receptor signaling complex and its regulation. The sequence is that of Stomatin-like protein 2, mitochondrial (Stoml2) from Mus musculus (Mouse).